The chain runs to 248 residues: tRNA (guanine-N(1)-)-methyltransferase (248 aa).

S-adenosyl-L-methionine contacts are provided by residues Gly-114 and 134 to 139; that span reads IGDYVL.

Belongs to the RNA methyltransferase TrmD family. Homodimer.

The protein localises to the cytoplasm. The enzyme catalyses guanosine(37) in tRNA + S-adenosyl-L-methionine = N(1)-methylguanosine(37) in tRNA + S-adenosyl-L-homocysteine + H(+). Specifically methylates guanosine-37 in various tRNAs. The sequence is that of tRNA (guanine-N(1)-)-methyltransferase from Blochmanniella floridana.